A 149-amino-acid chain; its full sequence is D-aminoacyl-tRNA deacylase (149 aa).

A Gly-cisPro motif, important for rejection of L-amino acids motif is present at residues 137 to 138 (GP).

Belongs to the DTD family. As to quaternary structure, homodimer.

It localises to the cytoplasm. It carries out the reaction glycyl-tRNA(Ala) + H2O = tRNA(Ala) + glycine + H(+). It catalyses the reaction a D-aminoacyl-tRNA + H2O = a tRNA + a D-alpha-amino acid + H(+). In terms of biological role, an aminoacyl-tRNA editing enzyme that deacylates mischarged D-aminoacyl-tRNAs. Also deacylates mischarged glycyl-tRNA(Ala), protecting cells against glycine mischarging by AlaRS. Acts via tRNA-based rather than protein-based catalysis; rejects L-amino acids rather than detecting D-amino acids in the active site. By recycling D-aminoacyl-tRNA to D-amino acids and free tRNA molecules, this enzyme counteracts the toxicity associated with the formation of D-aminoacyl-tRNA entities in vivo and helps enforce protein L-homochirality. This is D-aminoacyl-tRNA deacylase from Janthinobacterium sp. (strain Marseille) (Minibacterium massiliensis).